A 193-amino-acid chain; its full sequence is Penicillin-binding protein activator LpoB (193 aa).

The first 16 residues, 1 to 16, serve as a signal peptide directing secretion; the sequence is MKKMLFVVAAVFLLAG. A lipid anchor (N-palmitoyl cysteine) is attached at cysteine 17. The S-diacylglycerol cysteine moiety is linked to residue cysteine 17. The disordered stretch occupies residues 23-50; the sequence is QQPPAPVEPVTPTEPTEPPKPIEPPIEV. A compositionally biased stretch (pro residues) spans 37 to 46; sequence PTEPPKPIEP.

The protein belongs to the LpoB family. Interacts with PBP1b.

It localises to the cell outer membrane. In terms of biological role, regulator of peptidoglycan synthesis that is essential for the function of penicillin-binding protein 1B (PBP1b). The polypeptide is Penicillin-binding protein activator LpoB (Proteus mirabilis (strain HI4320)).